Here is a 790-residue protein sequence, read N- to C-terminus: Protein SEY1 (790 aa).

Over 1–692 the chain is Cytoplasmic; it reads MELSEGELSH…KRSIVQHITQ (692 aa). The GB1/RHD3-type G domain maps to 55–284; that stretch reads GNNYHIISVF…VNNELFKPEY (230 aa). Residue 65 to 72 coordinates GTP; it reads GSQSTGKS. A helical transmembrane segment spans residues 693–713; the sequence is IPYYIYLIILVLGWNEFMAII. Residues 714–716 are Lumenal-facing; that stretch reads RNP. The chain crosses the membrane as a helical span at residues 717 to 737; sequence LFFSLSIVLGATVYVLYYLNL. The Cytoplasmic portion of the chain corresponds to 738–790; that stretch reads LKPAMLVAQRTMDEVIIMAKTKLREVLIDDHEVTGRQLNKIAGGKENIELDDM.

This sequence belongs to the TRAFAC class dynamin-like GTPase superfamily. GB1/RHD3 GTPase family. RHD3 subfamily.

Its subcellular location is the endoplasmic reticulum membrane. Its function is as follows. Cooperates with the reticulon proteins and tubule-shaping DP1 family proteins to generate and maintain the structure of the tubular endoplasmic reticulum network. Has GTPase activity, which is required for its function in ER organization. The chain is Protein SEY1 from Candida dubliniensis (strain CD36 / ATCC MYA-646 / CBS 7987 / NCPF 3949 / NRRL Y-17841) (Yeast).